The sequence spans 232 residues: Peptidoglycan-recognition protein LB (232 aa).

The signal sequence occupies residues 1 to 15 (MTALGLVLLSMMGYS). The 127-residue stretch at 53 to 179 (APYVIIHHSY…RQVRDTECPG (127 aa)) folds into the N-acetylmuramoyl-L-alanine amidase domain. H59 contacts Zn(2+). A disulfide bridge connects residues C67 and C73. Positions 169 and 177 each coordinate Zn(2+). Residue N196 is glycosylated (N-linked (GlcNAc...) asparagine). A disordered region spans residues 213 to 232 (HPQAAAPQKPHQSPPAAPKV).

Belongs to the N-acetylmuramoyl-L-alanine amidase 2 family. In terms of assembly, monomer. Zn(2+) is required as a cofactor. In terms of tissue distribution, widely expressed.

The protein resides in the secreted. The enzyme catalyses Hydrolyzes the link between N-acetylmuramoyl residues and L-amino acid residues in certain cell-wall glycopeptides.. In terms of biological role, N-acetylmuramyl-L-alanine amidase involved in innate immunity by degrading bacterial peptidoglycans (PGN). Probably plays a scavenger role by digesting biologically active PGN into biologically inactive fragments. Has no direct bacteriolytic activity. This chain is Peptidoglycan-recognition protein LB (PGRP-LB), found in Drosophila melanogaster (Fruit fly).